A 354-amino-acid polypeptide reads, in one-letter code: NADH-quinone oxidoreductase subunit H (354 aa).

10 consecutive transmembrane segments (helical) span residues 12-32 (LLGG…LIAP), 62-82 (PWGL…EIIL), 89-109 (GLFL…WVVV), 124-144 (LLFL…AGWA), 162-182 (VSYE…SGTL), 203-223 (FLSW…ISGL), 239-259 (EIVA…FFLA), 263-283 (NMIL…LPPI), 291-311 (IPGW…FLWV), and 326-346 (LGWK…GLWI).

This sequence belongs to the complex I subunit 1 family. NDH-1 is composed of 14 different subunits. Subunits NuoA, H, J, K, L, M, N constitute the membrane sector of the complex.

It localises to the cell inner membrane. It catalyses the reaction a quinone + NADH + 5 H(+)(in) = a quinol + NAD(+) + 4 H(+)(out). In terms of biological role, NDH-1 shuttles electrons from NADH, via FMN and iron-sulfur (Fe-S) centers, to quinones in the respiratory chain. The immediate electron acceptor for the enzyme in this species is believed to be ubiquinone. Couples the redox reaction to proton translocation (for every two electrons transferred, four hydrogen ions are translocated across the cytoplasmic membrane), and thus conserves the redox energy in a proton gradient. This subunit may bind ubiquinone. This chain is NADH-quinone oxidoreductase subunit H, found in Methylibium petroleiphilum (strain ATCC BAA-1232 / LMG 22953 / PM1).